We begin with the raw amino-acid sequence, 127 residues long: uncharacterized protein (127 aa).

It is found in the mitochondrion. This is an uncharacterized protein from Arabidopsis thaliana (Mouse-ear cress).